The following is a 175-amino-acid chain: Large ribosomal subunit protein uL10 (175 aa).

The protein belongs to the universal ribosomal protein uL10 family. As to quaternary structure, part of the ribosomal stalk of the 50S ribosomal subunit. The N-terminus interacts with L11 and the large rRNA to form the base of the stalk. The C-terminus forms an elongated spine to which L12 dimers bind in a sequential fashion forming a multimeric L10(L12)X complex.

Functionally, forms part of the ribosomal stalk, playing a central role in the interaction of the ribosome with GTP-bound translation factors. This chain is Large ribosomal subunit protein uL10, found in Xylella fastidiosa (strain M23).